A 155-amino-acid chain; its full sequence is Transcription antitermination protein NusB (155 aa).

The protein belongs to the NusB family.

Functionally, involved in transcription antitermination. Required for transcription of ribosomal RNA (rRNA) genes. Binds specifically to the boxA antiterminator sequence of the ribosomal RNA (rrn) operons. The sequence is that of Transcription antitermination protein NusB from Halorhodospira halophila (strain DSM 244 / SL1) (Ectothiorhodospira halophila (strain DSM 244 / SL1)).